Consider the following 442-residue polypeptide: MSRINKFVLTVSLLIFIMISAVACGIYTQMVKERVYSLKQSVIDTAFAVANIAEYRRSVAIDLINTLNPTEEQLLVGLRTAYADSVSPSYLYDVGPYLISSDECIQVKEFEKNYCADIMQVVKYRHVKNTGFISFDGKTFVYYLYPVTHNRSLIFLLGLERFSLLSKSLAMDSENLMFSLFKNGKPVTGDEYNAKNAIFTVSEAMEHFAYLPTGLYVFAYKKDVYLRVCTLIIFFAALVAVISGASCLYLVRRVINRGIVEKEAIINNHFERVLDGGLFFSAADVKKLYSMYNSAFLDDLTKAMGRKSFDEDLKALPEKGGYLCLFDVDKFKNINDTFGHLLGDEVLMKVVKILKSQIPVDKGKVYRFGGDEFAVIYTGGTLEELLSILKEIVHFQVGSINLSTSIGVAHSNECPTVERLKMLADERLYKSKKNGRAQISWQ.

Positions 1-23 (MSRINKFVLTVSLLIFIMISAVA) are cleaved as a signal peptide. The N-palmitoyl cysteine moiety is linked to residue Cys24. Cys24 carries S-diacylglycerol cysteine lipidation. The helical transmembrane segment at 231-251 (LIIFFAALVAVISGASCLYLV) threads the bilayer. One can recognise a GGDEF domain in the interval 319–442 (KGGYLCLFDV…KNGRAQISWQ (124 aa)). A Mg(2+)-binding site is contributed by Asp327. Positions 335, 340, and 344 each coordinate substrate. Asp371 is a Mg(2+) binding site.

Homodimer. Mg(2+) serves as cofactor.

Its subcellular location is the cell membrane. It catalyses the reaction 2 GTP = 3',3'-c-di-GMP + 2 diphosphate. It functions in the pathway purine metabolism; 3',5'-cyclic di-GMP biosynthesis. Catalyzes the synthesis of cyclic-di-GMP (c-di-GMP) via the condensation of 2 GTP molecules. In Escherichia coli (strain K12), this protein is Probable diguanylate cyclase DgcI.